The primary structure comprises 153 residues: Fucose mutarotase (153 aa).

H24 functions as the Proton donor in the catalytic mechanism. D32 provides a ligand contact to substrate. Residue D69 is part of the active site. Positions 78, 119, 137, and 139 each coordinate substrate. Residue Y119 is part of the active site.

It belongs to the RbsD / FucU family.

The catalysed reaction is alpha-L-fucose = beta-L-fucose. Its function is as follows. Involved in the interconversion between alpha- and beta-L-fucoses. This chain is Fucose mutarotase (fuom), found in Danio rerio (Zebrafish).